A 244-amino-acid polypeptide reads, in one-letter code: 3-deoxy-manno-octulosonate cytidylyltransferase (244 aa).

The protein belongs to the KdsB family.

The protein resides in the cytoplasm. It carries out the reaction 3-deoxy-alpha-D-manno-oct-2-ulosonate + CTP = CMP-3-deoxy-beta-D-manno-octulosonate + diphosphate. It participates in nucleotide-sugar biosynthesis; CMP-3-deoxy-D-manno-octulosonate biosynthesis; CMP-3-deoxy-D-manno-octulosonate from 3-deoxy-D-manno-octulosonate and CTP: step 1/1. It functions in the pathway bacterial outer membrane biogenesis; lipopolysaccharide biosynthesis. In terms of biological role, activates KDO (a required 8-carbon sugar) for incorporation into bacterial lipopolysaccharide in Gram-negative bacteria. The protein is 3-deoxy-manno-octulosonate cytidylyltransferase of Ruthia magnifica subsp. Calyptogena magnifica.